Here is a 149-residue protein sequence, read N- to C-terminus: Transcriptional repressor NrdR (149 aa).

Residues 3-34 fold into a zinc finger; it reads CPFCGANDTKVIDSRLVADGHQVRRRRQCLAC. The 91-residue stretch at 49–139 folds into the ATP-cone domain; the sequence is PRVIKTDGNR…VYRSFEDIRE (91 aa).

The protein belongs to the NrdR family. The cofactor is Zn(2+).

Functionally, negatively regulates transcription of bacterial ribonucleotide reductase nrd genes and operons by binding to NrdR-boxes. The chain is Transcriptional repressor NrdR from Photobacterium profundum (strain SS9).